Consider the following 417-residue polypeptide: Glucose-1-phosphate adenylyltransferase (417 aa).

Alpha-D-glucose 1-phosphate is bound by residues Tyr98, Gly163, 178-179 (EK), and Ser197.

Belongs to the bacterial/plant glucose-1-phosphate adenylyltransferase family. Homotetramer.

It carries out the reaction alpha-D-glucose 1-phosphate + ATP + H(+) = ADP-alpha-D-glucose + diphosphate. Its pathway is glycan biosynthesis; glycogen biosynthesis. In terms of biological role, involved in the biosynthesis of ADP-glucose, a building block required for the elongation reactions to produce glycogen. Catalyzes the reaction between ATP and alpha-D-glucose 1-phosphate (G1P) to produce pyrophosphate and ADP-Glc. This is Glucose-1-phosphate adenylyltransferase from Koribacter versatilis (strain Ellin345).